A 235-amino-acid polypeptide reads, in one-letter code: Probable pyridoxal 5'-phosphate synthase subunit PDX1 (235 aa).

Lys16 acts as the Schiff-base intermediate with D-ribose 5-phosphate in catalysis. Arg104 serves as a coordination point for D-glyceraldehyde 3-phosphate. Residues Gly153 and 174 to 175 (GS) contribute to the D-ribose 5-phosphate site.

The protein belongs to the PdxS/SNZ family.

It carries out the reaction aldehydo-D-ribose 5-phosphate + D-glyceraldehyde 3-phosphate + L-glutamine = pyridoxal 5'-phosphate + L-glutamate + phosphate + 3 H2O + H(+). It functions in the pathway cofactor biosynthesis; pyridoxal 5'-phosphate biosynthesis. Its function is as follows. Catalyzes the formation of pyridoxal 5'-phosphate from ribose 5-phosphate (RBP), glyceraldehyde 3-phosphate (G3P) and ammonia. The ammonia is provided by PDX2. Can also use ribulose 5-phosphate and dihydroxyacetone phosphate as substrates, resulting from enzyme-catalyzed isomerization of RBP and G3P, respectively. Also plays an indirect role in resistance to singlet oxygen-generating photosensitizers. This is Probable pyridoxal 5'-phosphate synthase subunit PDX1 from Stellaria longipes (Longstalk starwort).